An 836-amino-acid polypeptide reads, in one-letter code: Probable serine/threonine-protein kinase dyrk1 (836 aa).

Low complexity predominate over residues 99-278 (QQQYQQQHNN…SSNNNNNNKQ (180 aa)). Residues 99 to 286 (QQQYQQQHNN…KQSKYNDGYD (188 aa)) are disordered. In terms of domain architecture, Protein kinase spans 304–624 (FEIISSLGKG…PLEALQHSFF (321 aa)). ATP is bound by residues 310–318 (LGKGSFGQV) and Lys333. The Proton acceptor role is filled by Asp432. Disordered stretches follow at residues 627 to 697 (DETS…QQQQ), 718 to 767 (TYSP…INSN), and 785 to 836 (NIYN…NNNI). Residues 630–697 (SQPPQQQSQQ…QQLQQQQQQQ (68 aa)) are compositionally biased toward low complexity. Over residues 718–728 (TYSPTTQQSNH) the composition is skewed to polar residues. The segment covering 729–744 (KLVDQMKKASMKDKSP) has biased composition (basic and acidic residues). Residues 785 to 816 (NIYNNNNNNNNNNNNNNNNNNSNNYNNSNELS) are compositionally biased toward low complexity.

Belongs to the protein kinase superfamily. CMGC Ser/Thr protein kinase family. MNB/DYRK subfamily.

It catalyses the reaction L-seryl-[protein] + ATP = O-phospho-L-seryl-[protein] + ADP + H(+). The catalysed reaction is L-threonyl-[protein] + ATP = O-phospho-L-threonyl-[protein] + ADP + H(+). It carries out the reaction L-tyrosyl-[protein] + ATP = O-phospho-L-tyrosyl-[protein] + ADP + H(+). This chain is Probable serine/threonine-protein kinase dyrk1 (dyrk1), found in Dictyostelium discoideum (Social amoeba).